The following is a 361-amino-acid chain: Mannonate dehydratase 1 (361 aa).

Belongs to the mannonate dehydratase family. The cofactor is Fe(2+). Mn(2+) is required as a cofactor.

The enzyme catalyses D-mannonate = 2-dehydro-3-deoxy-D-gluconate + H2O. Its pathway is carbohydrate metabolism; pentose and glucuronate interconversion. Catalyzes the dehydration of D-mannonate. This Halalkalibacterium halodurans (strain ATCC BAA-125 / DSM 18197 / FERM 7344 / JCM 9153 / C-125) (Bacillus halodurans) protein is Mannonate dehydratase 1 (uxuA1).